The chain runs to 87 residues: Defensin-like protein 176 (87 aa).

Residues M1–Q23 form the signal peptide. Cystine bridges form between C27–C66, C36–C55, C39–C60, and C43–C62.

Belongs to the DEFL family.

The protein localises to the secreted. This is Defensin-like protein 176 (LCR65) from Arabidopsis thaliana (Mouse-ear cress).